A 518-amino-acid chain; its full sequence is Protein nucleotidyltransferase YdiU (518 aa).

Residues Gly-109, Gly-111, Arg-112, Lys-131, Asp-143, Gly-144, Arg-194, and Arg-201 each contribute to the ATP site. The active-site Proton acceptor is the Asp-270. Residues Asn-271 and Asp-280 each coordinate Mg(2+). Asp-280 contributes to the ATP binding site.

It belongs to the SELO family. The cofactor is Mg(2+). It depends on Mn(2+) as a cofactor.

The enzyme catalyses L-seryl-[protein] + ATP = 3-O-(5'-adenylyl)-L-seryl-[protein] + diphosphate. The catalysed reaction is L-threonyl-[protein] + ATP = 3-O-(5'-adenylyl)-L-threonyl-[protein] + diphosphate. It catalyses the reaction L-tyrosyl-[protein] + ATP = O-(5'-adenylyl)-L-tyrosyl-[protein] + diphosphate. It carries out the reaction L-histidyl-[protein] + UTP = N(tele)-(5'-uridylyl)-L-histidyl-[protein] + diphosphate. The enzyme catalyses L-seryl-[protein] + UTP = O-(5'-uridylyl)-L-seryl-[protein] + diphosphate. The catalysed reaction is L-tyrosyl-[protein] + UTP = O-(5'-uridylyl)-L-tyrosyl-[protein] + diphosphate. Its function is as follows. Nucleotidyltransferase involved in the post-translational modification of proteins. It can catalyze the addition of adenosine monophosphate (AMP) or uridine monophosphate (UMP) to a protein, resulting in modifications known as AMPylation and UMPylation. The polypeptide is Protein nucleotidyltransferase YdiU (Paraburkholderia xenovorans (strain LB400)).